The chain runs to 231 residues: Large ribosomal subunit protein uL1 (231 aa).

It belongs to the universal ribosomal protein uL1 family. Part of the 50S ribosomal subunit.

In terms of biological role, binds directly to 23S rRNA. The L1 stalk is quite mobile in the ribosome, and is involved in E site tRNA release. Its function is as follows. Protein L1 is also a translational repressor protein, it controls the translation of the L11 operon by binding to its mRNA. This is Large ribosomal subunit protein uL1 from Macrococcus caseolyticus (strain JCSC5402) (Macrococcoides caseolyticum).